Consider the following 422-residue polypeptide: Light-independent protochlorophyllide reductase subunit N (422 aa).

3 residues coordinate [4Fe-4S] cluster: C26, C51, and C112.

It belongs to the BchN/ChlN family. As to quaternary structure, protochlorophyllide reductase is composed of three subunits; BchL, BchN and BchB. Forms a heterotetramer of two BchB and two BchN subunits. [4Fe-4S] cluster is required as a cofactor.

The catalysed reaction is chlorophyllide a + oxidized 2[4Fe-4S]-[ferredoxin] + 2 ADP + 2 phosphate = protochlorophyllide a + reduced 2[4Fe-4S]-[ferredoxin] + 2 ATP + 2 H2O. Its pathway is porphyrin-containing compound metabolism; bacteriochlorophyll biosynthesis (light-independent). In terms of biological role, component of the dark-operative protochlorophyllide reductase (DPOR) that uses Mg-ATP and reduced ferredoxin to reduce ring D of protochlorophyllide (Pchlide) to form chlorophyllide a (Chlide). This reaction is light-independent. The NB-protein (BchN-BchB) is the catalytic component of the complex. This is Light-independent protochlorophyllide reductase subunit N from Acidiphilium rubrum.